The chain runs to 93 residues: Small ribosomal subunit protein uS19 (93 aa).

Belongs to the universal ribosomal protein uS19 family.

Protein S19 forms a complex with S13 that binds strongly to the 16S ribosomal RNA. In Salinispora tropica (strain ATCC BAA-916 / DSM 44818 / JCM 13857 / NBRC 105044 / CNB-440), this protein is Small ribosomal subunit protein uS19.